We begin with the raw amino-acid sequence, 89 residues long: Small ribosomal subunit protein uS17 (89 aa).

The protein belongs to the universal ribosomal protein uS17 family. In terms of assembly, part of the 30S ribosomal subunit.

One of the primary rRNA binding proteins, it binds specifically to the 5'-end of 16S ribosomal RNA. The chain is Small ribosomal subunit protein uS17 from Xanthomonas campestris pv. campestris (strain B100).